Consider the following 376-residue polypeptide: Ribonucleoside-diphosphate reductase subunit beta (376 aa).

Fe cation contacts are provided by Asp85, Glu116, and His119. Tyr123 is a catalytic residue. Fe cation-binding residues include Glu205, Glu239, and His242.

This sequence belongs to the ribonucleoside diphosphate reductase small chain family. In terms of assembly, tetramer of two alpha and two beta subunits. It depends on Fe cation as a cofactor.

The catalysed reaction is a 2'-deoxyribonucleoside 5'-diphosphate + [thioredoxin]-disulfide + H2O = a ribonucleoside 5'-diphosphate + [thioredoxin]-dithiol. Provides the precursors necessary for DNA synthesis. Catalyzes the biosynthesis of deoxyribonucleotides from the corresponding ribonucleotides. This is Ribonucleoside-diphosphate reductase subunit beta (nrdB) from Buchnera aphidicola subsp. Acyrthosiphon pisum (strain APS) (Acyrthosiphon pisum symbiotic bacterium).